Here is a 143-residue protein sequence, read N- to C-terminus: S-adenosylmethionine decarboxylase proenzyme (143 aa).

Residue serine 66 is the Schiff-base intermediate with substrate; via pyruvic acid of the active site. Serine 66 carries the post-translational modification Pyruvic acid (Ser); by autocatalysis. Histidine 71 acts as the Proton acceptor; for processing activity in catalysis. Cysteine 86 (proton donor; for catalytic activity) is an active-site residue.

Belongs to the prokaryotic AdoMetDC family. Type 1 subfamily. In terms of assembly, heterotetramer of two alpha and two beta chains arranged as a dimer of alpha/beta heterodimers. Requires pyruvate as cofactor. Post-translationally, is synthesized initially as an inactive proenzyme. Formation of the active enzyme involves a self-maturation process in which the active site pyruvoyl group is generated from an internal serine residue via an autocatalytic post-translational modification. Two non-identical subunits are generated from the proenzyme in this reaction, and the pyruvate is formed at the N-terminus of the alpha chain, which is derived from the carboxyl end of the proenzyme. The post-translation cleavage follows an unusual pathway, termed non-hydrolytic serinolysis, in which the side chain hydroxyl group of the serine supplies its oxygen atom to form the C-terminus of the beta chain, while the remainder of the serine residue undergoes an oxidative deamination to produce ammonia and the pyruvoyl group blocking the N-terminus of the alpha chain.

It catalyses the reaction S-adenosyl-L-methionine + H(+) = S-adenosyl 3-(methylsulfanyl)propylamine + CO2. It functions in the pathway amine and polyamine biosynthesis; S-adenosylmethioninamine biosynthesis; S-adenosylmethioninamine from S-adenosyl-L-methionine: step 1/1. Functionally, catalyzes the decarboxylation of S-adenosylmethionine to S-adenosylmethioninamine (dcAdoMet), the propylamine donor required for the synthesis of the polyamines spermine and spermidine from the diamine putrescine. The polypeptide is S-adenosylmethionine decarboxylase proenzyme (Thermococcus gammatolerans (strain DSM 15229 / JCM 11827 / EJ3)).